We begin with the raw amino-acid sequence, 157 residues long: 2-C-methyl-D-erythritol 2,4-cyclodiphosphate synthase (157 aa).

A divalent metal cation is bound by residues Asp8 and His10. Residues 8-10 (DVH) and 34-35 (HS) each bind 4-CDP-2-C-methyl-D-erythritol 2-phosphate. His42 provides a ligand contact to a divalent metal cation. 4-CDP-2-C-methyl-D-erythritol 2-phosphate contacts are provided by residues 56 to 58 (DIG), 132 to 135 (TTNE), and Arg142.

It belongs to the IspF family. Homotrimer. It depends on a divalent metal cation as a cofactor.

The enzyme catalyses 4-CDP-2-C-methyl-D-erythritol 2-phosphate = 2-C-methyl-D-erythritol 2,4-cyclic diphosphate + CMP. The protein operates within isoprenoid biosynthesis; isopentenyl diphosphate biosynthesis via DXP pathway; isopentenyl diphosphate from 1-deoxy-D-xylulose 5-phosphate: step 4/6. Functionally, involved in the biosynthesis of isopentenyl diphosphate (IPP) and dimethylallyl diphosphate (DMAPP), two major building blocks of isoprenoid compounds. Catalyzes the conversion of 4-diphosphocytidyl-2-C-methyl-D-erythritol 2-phosphate (CDP-ME2P) to 2-C-methyl-D-erythritol 2,4-cyclodiphosphate (ME-CPP) with a corresponding release of cytidine 5-monophosphate (CMP). In Chlorobium luteolum (strain DSM 273 / BCRC 81028 / 2530) (Pelodictyon luteolum), this protein is 2-C-methyl-D-erythritol 2,4-cyclodiphosphate synthase.